We begin with the raw amino-acid sequence, 374 residues long: tRNA-specific 2-thiouridylase MnmA (374 aa).

ATP-binding positions include 17 to 24 (GMSGGVDS) and M43. The interval 103 to 105 (NPD) is interaction with target base in tRNA. The Nucleophile role is filled by C108. C108 and C204 form a disulfide bridge. G132 provides a ligand contact to ATP. Positions 154–156 (KDQ) are interaction with tRNA. C204 functions as the Cysteine persulfide intermediate in the catalytic mechanism. The segment at 316–317 (RY) is interaction with tRNA.

The protein belongs to the MnmA/TRMU family.

Its subcellular location is the cytoplasm. The enzyme catalyses S-sulfanyl-L-cysteinyl-[protein] + uridine(34) in tRNA + AH2 + ATP = 2-thiouridine(34) in tRNA + L-cysteinyl-[protein] + A + AMP + diphosphate + H(+). Functionally, catalyzes the 2-thiolation of uridine at the wobble position (U34) of tRNA, leading to the formation of s(2)U34. The chain is tRNA-specific 2-thiouridylase MnmA from Pseudomonas putida (strain GB-1).